The following is a 249-amino-acid chain: 3-deoxy-manno-octulosonate cytidylyltransferase (249 aa).

It belongs to the KdsB family.

It localises to the cytoplasm. It carries out the reaction 3-deoxy-alpha-D-manno-oct-2-ulosonate + CTP = CMP-3-deoxy-beta-D-manno-octulosonate + diphosphate. It participates in nucleotide-sugar biosynthesis; CMP-3-deoxy-D-manno-octulosonate biosynthesis; CMP-3-deoxy-D-manno-octulosonate from 3-deoxy-D-manno-octulosonate and CTP: step 1/1. The protein operates within bacterial outer membrane biogenesis; lipopolysaccharide biosynthesis. Its function is as follows. Activates KDO (a required 8-carbon sugar) for incorporation into bacterial lipopolysaccharide in Gram-negative bacteria. This chain is 3-deoxy-manno-octulosonate cytidylyltransferase, found in Brucella anthropi (strain ATCC 49188 / DSM 6882 / CCUG 24695 / JCM 21032 / LMG 3331 / NBRC 15819 / NCTC 12168 / Alc 37) (Ochrobactrum anthropi).